We begin with the raw amino-acid sequence, 1192 residues long: Outer capsid protein VP2 (1192 aa).

The interval 1112 to 1192 (IDQFMLDDMP…QSVAKPGIVR (81 aa)) is disordered. Low complexity predominate over residues 1140 to 1150 (PSAAANTEAST). Over residues 1159 to 1183 (NVVSPTVPGQPSQTPVNPNQSTELQ) the composition is skewed to polar residues.

The protein resides in the virion. It catalyses the reaction a 5'-end diphospho-ribonucleoside in mRNA + GTP + H(+) = a 5'-end (5'-triphosphoguanosine)-ribonucleoside in mRNA + diphosphate. The catalysed reaction is a 5'-end (5'-triphosphoguanosine)-ribonucleoside in mRNA + S-adenosyl-L-methionine = a 5'-end (N(7)-methyl 5'-triphosphoguanosine)-ribonucleoside in mRNA + S-adenosyl-L-homocysteine. Functionally, outer capsid protein involved in mRNA capping. Catalyzes the last 3 enzymatic activities for formation of the 5' cap structure on the viral plus-strand transcripts, namely the RNA guanylyltransferase, RNA-7N- and RNA-2'O-methyltransferase activities. In Rice ragged stunt virus (isolate Thailand) (RRSV), this protein is Outer capsid protein VP2 (S2).